The primary structure comprises 137 residues: Large ribosomal subunit protein uL16 (137 aa).

The segment covering M1–N17 has biased composition (basic residues). Positions M1–A21 are disordered.

Belongs to the universal ribosomal protein uL16 family. As to quaternary structure, part of the 50S ribosomal subunit.

Binds 23S rRNA and is also seen to make contacts with the A and possibly P site tRNAs. The chain is Large ribosomal subunit protein uL16 from Nitrosococcus oceani (strain ATCC 19707 / BCRC 17464 / JCM 30415 / NCIMB 11848 / C-107).